The primary structure comprises 184 residues: Shikimate kinase (184 aa).

20-25 (GVGKSR) provides a ligand contact to ATP. S24 contributes to the Mg(2+) binding site. Residues D42, R66, and G88 each contribute to the substrate site. R127 is a binding site for ATP. R146 provides a ligand contact to substrate. R162 is a binding site for ATP.

The protein belongs to the shikimate kinase family. In terms of assembly, monomer. Requires Mg(2+) as cofactor.

Its subcellular location is the cytoplasm. The catalysed reaction is shikimate + ATP = 3-phosphoshikimate + ADP + H(+). It functions in the pathway metabolic intermediate biosynthesis; chorismate biosynthesis; chorismate from D-erythrose 4-phosphate and phosphoenolpyruvate: step 5/7. In terms of biological role, catalyzes the specific phosphorylation of the 3-hydroxyl group of shikimic acid using ATP as a cosubstrate. The chain is Shikimate kinase from Thermus thermophilus (strain ATCC BAA-163 / DSM 7039 / HB27).